The chain runs to 252 residues: uncharacterized protein (252 aa).

Tandem repeats lie at residues 68 to 82 (TYNQSQNVCPQDLVD), 83 to 97 (TYNQSQNVCPQDLVD), 98 to 112 (TYNQSQNVCPQDLVD), 113 to 127 (TYNQSQNVCPQDLVD), 128 to 142 (TYNQSQNVCPQDLVD), 143 to 157 (TYNQSQNVCPQDLVD), 158 to 172 (TYNQSQNVYTQDLID), 173 to 187 (TYNQSQNVCPQDLVD), 188 to 202 (TYNQSQNVCPQDLVD), and 203 to 217 (TYNQSQNVCPQDLVD). Positions 68 to 246 (TYNQSQNVCP…LIDTYNQSQN (179 aa)) are 13 X 15 AA tandem repeats. Residues 218-230 (TYNQSQNVCPQDL) form an 11; truncated repeat. The 12; truncated repeat unit spans residues 231-239 (NVYTQDLID). The stretch at 240-246 (TYNQSQN) is one 13; truncated repeat.

Functionally, a protein probably derived from this gene is found in cuboidal crystalline inclusions, but is not toxic even when coexpressed with upstream ORF1. The protein runs anomalously as a 50 kDa band in gels. This is an uncharacterized protein from Bacillus thuringiensis subsp. kurstaki.